The sequence spans 886 residues: Desmocollin-1 (886 aa).

The signal sequence occupies residues 1 to 29 (MAVACAAPGSTFSKQLLFFLLVLVLFCDA). Positions 30 to 134 (CQKVSLHVPS…KEPVHNRSKR (105 aa)) are excised as a propeptide. N-linked (GlcNAc...) asparagine glycans are attached at residues N130 and N165. Cadherin domains follow at residues 135–242 (RWAP…APYF), 243–354 (ETKL…SPYF), 355–471 (TQTS…GPEC), 472–575 (QPPV…DHPP), and 576–682 (QIDK…EERD). Over 135–691 (RWAPIPCSLM…DAKPNIILGK (557 aa)) the chain is Extracellular. T385 carries the post-translational modification Phosphothreonine. N546 carries N-linked (GlcNAc...) (high mannose) asparagine glycosylation. N613 carries an N-linked (GlcNAc...) asparagine glycan. The chain crosses the membrane as a helical span at residues 692–714 (WAILAMVLGSALLLCILFTCFCV). Residues 715 to 886 (TTTKRTVKKC…RTLAKTCVKK (172 aa)) are Cytoplasmic-facing.

As to quaternary structure, binds to JUP/plakoglobin. Expressed in the epidermis and inner root sheaths of hair follicles (at protein level).

Its subcellular location is the cell membrane. The protein localises to the cell junction. It localises to the desmosome. Its function is as follows. A component of desmosome cell-cell junctions which are required for positive regulation of cellular adhesion. Required for desmosome adhesion strength between the granular layers of the epidermis, as a result moderates epidermal proliferation and differentiation. Is therefore required to maintain postnatal epidermal barrier function and normal hair follicle morphology into adulthood. In Mus musculus (Mouse), this protein is Desmocollin-1 (Dsc1).